We begin with the raw amino-acid sequence, 240 residues long: Triosephosphate isomerase (240 aa).

A substrate-binding site is contributed by 6–8 (NLK). Histidine 88 (electrophile) is an active-site residue. The Proton acceptor role is filled by glutamate 157. Glycine 163 and serine 193 together coordinate substrate.

This sequence belongs to the triosephosphate isomerase family. Homodimer.

Its subcellular location is the cytoplasm. It carries out the reaction D-glyceraldehyde 3-phosphate = dihydroxyacetone phosphate. The protein operates within carbohydrate biosynthesis; gluconeogenesis. It participates in carbohydrate degradation; glycolysis; D-glyceraldehyde 3-phosphate from glycerone phosphate: step 1/1. Functionally, involved in the gluconeogenesis. Catalyzes stereospecifically the conversion of dihydroxyacetone phosphate (DHAP) to D-glyceraldehyde-3-phosphate (G3P). In Sulfurimonas denitrificans (strain ATCC 33889 / DSM 1251) (Thiomicrospira denitrificans (strain ATCC 33889 / DSM 1251)), this protein is Triosephosphate isomerase.